The chain runs to 250 residues: Pyrroloquinoline-quinone synthase (250 aa).

This sequence belongs to the PqqC family.

The catalysed reaction is 6-(2-amino-2-carboxyethyl)-7,8-dioxo-1,2,3,4,7,8-hexahydroquinoline-2,4-dicarboxylate + 3 O2 = pyrroloquinoline quinone + 2 H2O2 + 2 H2O + H(+). Its pathway is cofactor biosynthesis; pyrroloquinoline quinone biosynthesis. Its function is as follows. Ring cyclization and eight-electron oxidation of 3a-(2-amino-2-carboxyethyl)-4,5-dioxo-4,5,6,7,8,9-hexahydroquinoline-7,9-dicarboxylic-acid to PQQ. This chain is Pyrroloquinoline-quinone synthase, found in Xanthomonas campestris pv. campestris (strain B100).